The primary structure comprises 84 residues: Large ribosomal subunit protein bL28 (84 aa).

It belongs to the bacterial ribosomal protein bL28 family.

The sequence is that of Large ribosomal subunit protein bL28 from Deinococcus geothermalis (strain DSM 11300 / CIP 105573 / AG-3a).